The sequence spans 297 residues: Heme A synthase (297 aa).

At Met1–Lys6 the chain is on the cytoplasmic side. A helical transmembrane segment spans residues Ile7–Thr27. Residues Lys28–Arg62 are Extracellular-facing. A disulfide bridge links Cys35 with Cys42. Glu58 is an active-site residue. Position 61 (His61) interacts with heme o. The chain crosses the membrane as a helical span at residues Ile63 to Leu83. The Cytoplasmic segment spans residues Lys84–Ser93. A helical membrane pass occupies residues Phe94 to Gly114. Residues Gln115 to Ala118 lie on the Extracellular side of the membrane. A helical membrane pass occupies residues Ile119–Ile139. His123 is a heme o binding site. The Cytoplasmic segment spans residues Leu140 to Arg156. A helical transmembrane segment spans residues Gly157–Ala177. The Extracellular portion of the chain corresponds to Tyr178–Tyr210. An intrachain disulfide couples Cys188 to Cys194. The helical transmembrane segment at Phe211–Leu231 threads the bilayer. Residue His212 participates in heme b binding. The Cytoplasmic portion of the chain corresponds to Ser232–Trp242. A helical membrane pass occupies residues Thr243–Phe263. At Thr264–Gly271 the chain is on the extracellular side. The chain crosses the membrane as a helical span at residues Leu272–Ile292. Position 274 (His274) interacts with heme b. The Cytoplasmic portion of the chain corresponds to Thr293–His297.

The protein belongs to the COX15/CtaA family. Type 1 subfamily. As to quaternary structure, interacts with CtaB. Heme b serves as cofactor.

It localises to the cell membrane. It catalyses the reaction Fe(II)-heme o + 2 A + H2O = Fe(II)-heme a + 2 AH2. It participates in porphyrin-containing compound metabolism; heme A biosynthesis; heme A from heme O: step 1/1. Functionally, catalyzes the conversion of heme O to heme A by two successive hydroxylations of the methyl group at C8. The first hydroxylation forms heme I, the second hydroxylation results in an unstable dihydroxymethyl group, which spontaneously dehydrates, resulting in the formyl group of heme A. In Alkalihalophilus pseudofirmus (strain ATCC BAA-2126 / JCM 17055 / OF4) (Bacillus pseudofirmus), this protein is Heme A synthase.